The following is an 886-amino-acid chain: Alanine--tRNA ligase (886 aa).

4 residues coordinate Zn(2+): histidine 564, histidine 568, cysteine 666, and histidine 670.

Belongs to the class-II aminoacyl-tRNA synthetase family. It depends on Zn(2+) as a cofactor.

It localises to the cytoplasm. The catalysed reaction is tRNA(Ala) + L-alanine + ATP = L-alanyl-tRNA(Ala) + AMP + diphosphate. In terms of biological role, catalyzes the attachment of alanine to tRNA(Ala) in a two-step reaction: alanine is first activated by ATP to form Ala-AMP and then transferred to the acceptor end of tRNA(Ala). Also edits incorrectly charged Ser-tRNA(Ala) and Gly-tRNA(Ala) via its editing domain. The polypeptide is Alanine--tRNA ligase (Prochlorococcus marinus (strain AS9601)).